Consider the following 236-residue polypeptide: Heme oxygenase (236 aa).

Histidine 17 is a binding site for heme b.

It belongs to the heme oxygenase family.

The protein resides in the plastid. The protein localises to the chloroplast. It catalyses the reaction heme b + 3 reduced [NADPH--hemoprotein reductase] + 3 O2 = biliverdin IXalpha + CO + Fe(2+) + 3 oxidized [NADPH--hemoprotein reductase] + 3 H2O + H(+). Functionally, catalyzes the opening of the heme ring with the release of iron. Key enzyme in the synthesis of the chromophoric part of the photosynthetic antennae. The polypeptide is Heme oxygenase (pbsA) (Porphyra purpurea (Red seaweed)).